Here is a 568-residue protein sequence, read N- to C-terminus: Clathrin coat assembly protein AP180B (568 aa).

The region spanning 1–127 (MSSLYTKLVK…EEYGRLGMDH (127 aa)) is the ENTH domain. Residues 262–283 (HLREETKRQRGEPSEPQQDRKP) are compositionally biased toward basic and acidic residues. Residues 262-302 (HLREETKRQRGEPSEPQQDRKPSTAISSTSSHNNNSNDKNK) are disordered. Lysine 282 participates in a covalent cross-link: Glycyl lysine isopeptide (Lys-Gly) (interchain with G-Cter in ubiquitin). Low complexity predominate over residues 284–298 (STAISSTSSHNNNSN). Threonine 449 carries the post-translational modification Phosphothreonine.

This sequence belongs to the AP180 family. In terms of assembly, interacts with PAN1 and the clathrin heavy and light chains CHC1 and CLC1.

The protein resides in the bud. The protein localises to the bud neck. Its subcellular location is the cell membrane. It is found in the cytoplasm. Its function is as follows. Involved in endocytosis and clathrin cage assembly. The polypeptide is Clathrin coat assembly protein AP180B (YAP1802) (Saccharomyces cerevisiae (strain ATCC 204508 / S288c) (Baker's yeast)).